Consider the following 314-residue polypeptide: tRNA-cytidine(32) 2-sulfurtransferase (314 aa).

Residues S39–S44 carry the PP-loop motif motif. [4Fe-4S] cluster-binding residues include C114, C117, and C205.

This sequence belongs to the TtcA family. In terms of assembly, homodimer. Requires Mg(2+) as cofactor. [4Fe-4S] cluster is required as a cofactor.

Its subcellular location is the cytoplasm. It catalyses the reaction cytidine(32) in tRNA + S-sulfanyl-L-cysteinyl-[cysteine desulfurase] + AH2 + ATP = 2-thiocytidine(32) in tRNA + L-cysteinyl-[cysteine desulfurase] + A + AMP + diphosphate + H(+). The protein operates within tRNA modification. Functionally, catalyzes the ATP-dependent 2-thiolation of cytidine in position 32 of tRNA, to form 2-thiocytidine (s(2)C32). The sulfur atoms are provided by the cysteine/cysteine desulfurase (IscS) system. The sequence is that of tRNA-cytidine(32) 2-sulfurtransferase from Cupriavidus necator (strain ATCC 17699 / DSM 428 / KCTC 22496 / NCIMB 10442 / H16 / Stanier 337) (Ralstonia eutropha).